Here is a 160-residue protein sequence, read N- to C-terminus: Nucleotide-binding protein VP1617 (160 aa).

Belongs to the YajQ family.

In terms of biological role, nucleotide-binding protein. This chain is Nucleotide-binding protein VP1617, found in Vibrio parahaemolyticus serotype O3:K6 (strain RIMD 2210633).